The sequence spans 443 residues: Na(+)-translocating NADH-quinone reductase subunit A (443 aa).

It belongs to the NqrA family. As to quaternary structure, composed of six subunits; NqrA, NqrB, NqrC, NqrD, NqrE and NqrF.

It carries out the reaction a ubiquinone + n Na(+)(in) + NADH + H(+) = a ubiquinol + n Na(+)(out) + NAD(+). Functionally, NQR complex catalyzes the reduction of ubiquinone-1 to ubiquinol by two successive reactions, coupled with the transport of Na(+) ions from the cytoplasm to the periplasm. NqrA to NqrE are probably involved in the second step, the conversion of ubisemiquinone to ubiquinol. In Mannheimia succiniciproducens (strain KCTC 0769BP / MBEL55E), this protein is Na(+)-translocating NADH-quinone reductase subunit A.